The sequence spans 466 residues: MGKSLYQKLYDAHIVHKNKDDVPILYIDRHLLHEVTSPQAFEALRLRKRIVRQPNKTFATMDHNVPTTTKNINHSGSMAKEQLDRLTKNCKDFGITLFGLNHPYQGIVHVLAPEQGITLPGMTIVCGDSHTATHGAFGALAFGIGTSEIEHVLATQTLQQIRYKSMQINLSGIIAPQITAKDIILAIIGKIGHGGGSGHVVEFCGPIITLLSMEERMTLCNMAIEMGATSALIAPDRTTYDYLKNRKFSPTGKNWEQALLYWKTLYSDHDAHFDKKFDFDVSNVNPQVTWGTNPSQVISIDQPIPSLESFIDPIERNSAERALIYMKLQSNTYLTDVSIDKVFIGSCTNSRIEDLRVAAQTIKGHHISKNTQAIVVPGSKLVKNQAEKEGLNKIFIQAGFEWRLPGCSMCLAMNNDRLEPGERCASTSNRNFEGRQGRGSRTHLVSPAMAAAAAIAGRFVDIRKFK.

Residues Cys347, Cys407, and Cys410 each contribute to the [4Fe-4S] cluster site.

It belongs to the aconitase/IPM isomerase family. LeuC type 1 subfamily. In terms of assembly, heterodimer of LeuC and LeuD. It depends on [4Fe-4S] cluster as a cofactor.

It carries out the reaction (2R,3S)-3-isopropylmalate = (2S)-2-isopropylmalate. Its pathway is amino-acid biosynthesis; L-leucine biosynthesis; L-leucine from 3-methyl-2-oxobutanoate: step 2/4. Its function is as follows. Catalyzes the isomerization between 2-isopropylmalate and 3-isopropylmalate, via the formation of 2-isopropylmaleate. In Blochmanniella pennsylvanica (strain BPEN), this protein is 3-isopropylmalate dehydratase large subunit.